We begin with the raw amino-acid sequence, 642 residues long: Frizzled and smoothened-like protein B (642 aa).

An N-terminal signal peptide occupies residues 1–26; that stretch reads MFNKNNNNNKIIIILKLFLIILIVNN. Topologically, residues 27–264 are extracellular; the sequence is NNNIKTFGLN…KWHQMYNMSK (238 aa). The FZ domain occupies 47–197; it reads DPTATCSNYI…GFFPVPCSDP (151 aa). Intrachain disulfides connect C52–C123, C65–C116, and C143–C194. N-linked (GlcNAc...) asparagine glycans are attached at residues N80, N153, N162, N177, N203, N222, and N261. Residues 265–285 traverse the membrane as a helical segment; it reads ILSTISFVCSIYNVLTFGILN. At 286 to 294 the chain is on the cytoplasmic side; sequence HRRSKYNYC. The helical transmembrane segment at 295-315 threads the bilayer; sequence ITFFSASVIIITMMDIVTYGI. The Extracellular portion of the chain corresponds to 316-344; that stretch reads GYEKLLCPEPGRFAVQSDVSCGATGALFH. A helical membrane pass occupies residues 345–365; that stretch reads IGITNGVFWWTTMSICLFAVV. Over 366 to 375 the chain is Cytoplasmic; it reads KRIKLFDFRY. The helical transmembrane segment at 376–398 threads the bilayer; the sequence is FIIFNTTASLISVIIPLAGNAFM. Over 399–416 the chain is Extracellular; that stretch reads AGTGSLACWIRKTWYVNS. The helical transmembrane segment at 417-437 threads the bilayer; that stretch reads VFWIPCGIALTIGSVCIILVI. The Cytoplasmic segment spans residues 438–460; it reads YEIYKITKNVSTKDNRMILLQIK. Residues 461–481 form a helical membrane-spanning segment; that stretch reads PFLCVTLVGGSFYYLFIFNFD. The N-linked (GlcNAc...) asparagine glycan is linked to N482. Residues 482–514 are Extracellular-facing; sequence NESHSKEYKEKVVDYVMCLLSDTGKECLMAGPN. Residues 515–535 traverse the membrane as a helical segment; it reads YVAYFVFYFFIRLFGITFFCI. Over 536-642 the chain is Cytoplasmic; sequence YGTSQNARDI…INSASNTSSD (107 aa). The disordered stretch occupies residues 578 to 642; that stretch reads GTNPTSNSKN…INSASNTSSD (65 aa). Low complexity predominate over residues 583-598; it reads SNSKNSKNNQNNQNNN. The stretch at 584–611 forms a coiled coil; that stretch reads NSKNSKNNQNNQNNNSRKEFESKNIELE. The span at 599 to 609 shows a compositional bias: basic and acidic residues; it reads SRKEFESKNIE. Composition is skewed to polar residues over residues 614–623 and 632–642; these read ESISKGQTTR and NINSASNTSSD.

It belongs to the G-protein coupled receptor Fz/Smo family.

The protein resides in the membrane. The sequence is that of Frizzled and smoothened-like protein B (fslB) from Dictyostelium discoideum (Social amoeba).